The following is a 336-amino-acid chain: Cytoskeleton protein RodZ (336 aa).

The Cytoplasmic portion of the chain corresponds to 1–111 (MNTEATHDQN…LGKRRKKRDG (111 aa)). One can recognise an HTH cro/C1-type domain in the interval 19-71 (LRNAREQLGLSQQAVAERLCLKVSTVRDIEEDKAPADLASTFLRGYIRSYARL). A DNA-binding region (H-T-H motif) is located at residues 30-49 (QQAVAERLCLKVSTVRDIEE). Residues 112-132 (WLMTFTWLVLFVVIGLSGAWW) form a helical; Signal-anchor for type II membrane protein membrane-spanning segment. Topologically, residues 133 to 336 (WQDHKAQQEE…TLNAEQSPAQ (204 aa)) are periplasmic. Positions 148–164 (DQSSAELNNNQSQSVPL) are enriched in polar residues. Residues 148–248 (DQSSAELNNN…TDQAGVTTPA (101 aa)) are disordered. Low complexity predominate over residues 165–201 (DTSTTTDQAMATTPTSPVDTTATNTQTPAATTAPSPT). Over residues 202 to 217 (VDSQQNAVVPPSQANV) the composition is skewed to polar residues. Positions 219 to 236 (TAATPAPAATTMPDGAAP) are enriched in low complexity.

It belongs to the RodZ family.

It localises to the cell inner membrane. In terms of biological role, cytoskeletal protein that is involved in cell-shape control through regulation of the length of the long axis. The polypeptide is Cytoskeleton protein RodZ (Escherichia coli (strain SMS-3-5 / SECEC)).